Consider the following 871-residue polypeptide: MAKIRIHEIAKELGYDSKEIIEKANELGLGIKTASNAVEPEIAAAIYEYIQTREIPEAFKKNIKTPTAKKPKKENIKEQEKLNESEKKEPKKEEKLKQEVKKEELKVEKENVKEEEKQEIIDAHKPQSLASATLAKRRGLVIVKKKKDEEEIQVKKEEVKNSNDISINNEERLSLKTMFSNADESLKKKKKEKKSFVASKKESTEKMNFLDEHDFGDISLDDEDEVVLPDFSVKEQEKPQNINKKQPNFIRQAVGNSAGFGLEGGIQRRSRKKPPKKIEKKEVEEVSSVAISKEIRVYEFADKIGKSTSEVISKLFMLGMMTTKNDFLDEDAIEILAAEFGIEINIINEADEFDYVKDYEEETDEKDLVTRAPVITIMGHVDHGKTSLLDYIRKSRVASGEAGGITQHVGAYMVEKNGRKITFIDTPGHEAFTAMRARGASITDIVIIVVAADDGVKPQTKEAINHAKAAGVPIIIAINKMDKEAANPDMVKTQLAEMEIMPVEWGGSYEFVGVSAKTGMGIEDLLEIVLLQADILELKANPKSFAKASIIESSVQKGRGAVATIIVQNGTLTVGSTVVAGEAYGKVRAMSDDQGKALKEIKPGECGVIVGLSEVADAGEILIAVKTDKEAREYANKRHEYNRQKELSKSTKVSIDELGAKIKEGNLKALPVILKADVQGSLEALKASLEKLRNDEIKVNIIHSGVGGITQSDIELASASENSIVLGFNIRPTGEVKERAKDKGVEIKTYNVIYNLLDDVKALLGGMMSPIISEEQLGQAEIRQVINVPKIGQIAGCMVTEGVINRGAKIRLIRDGVVVYEGNVSSLKRFKDDAKEVAKGYECGVGIEGCDDMRVGDYIESYKEVEEQASL.

2 disordered regions span residues 60-101 and 184-203; these read KKNI…QEVK and ESLKKKKKEKKSFVASKKES. Basic residues predominate over residues 61–72; it reads KNIKTPTAKKPK. Positions 73–101 are enriched in basic and acidic residues; it reads KENIKEQEKLNESEKKEPKKEEKLKQEVK. The 168-residue stretch at 370 to 537 folds into the tr-type G domain; sequence TRAPVITIMG…IVLLQADILE (168 aa). Residues 379 to 386 are G1; sequence GHVDHGKT. Residue 379-386 participates in GTP binding; sequence GHVDHGKT. The G2 stretch occupies residues 404-408; it reads GITQH. Residues 425–428 form a G3 region; it reads DTPG. GTP-binding positions include 425-429 and 479-482; these read DTPGH and NKMD. Residues 479 to 482 are G4; it reads NKMD. A G5 region spans residues 515–517; sequence SAK.

The protein belongs to the TRAFAC class translation factor GTPase superfamily. Classic translation factor GTPase family. IF-2 subfamily.

The protein resides in the cytoplasm. In terms of biological role, one of the essential components for the initiation of protein synthesis. Protects formylmethionyl-tRNA from spontaneous hydrolysis and promotes its binding to the 30S ribosomal subunits. Also involved in the hydrolysis of GTP during the formation of the 70S ribosomal complex. This chain is Translation initiation factor IF-2, found in Campylobacter jejuni subsp. jejuni serotype O:6 (strain 81116 / NCTC 11828).